The following is a 180-amino-acid chain: MRILGIDPGLRVTGFGVIDVSGHQLAYVASGVIKTPTADLPTRLGTIYDGVSTLIREHTPDQAAIEKVFVNVNPQSTLLLGQARGAAICGLVSGGLPVAEYTALQLKQAVVGYGRATKEQMQEMVARLLSLSGRPGTDAADALGMAICHAHGGNTLNTLGGIAPALAKKGLRVRRGRLVG.

Residues Asp-7, Glu-66, and Asp-138 contribute to the active site. Asp-7, Glu-66, and Asp-138 together coordinate Mg(2+).

This sequence belongs to the RuvC family. Homodimer which binds Holliday junction (HJ) DNA. The HJ becomes 2-fold symmetrical on binding to RuvC with unstacked arms; it has a different conformation from HJ DNA in complex with RuvA. In the full resolvosome a probable DNA-RuvA(4)-RuvB(12)-RuvC(2) complex forms which resolves the HJ. Requires Mg(2+) as cofactor.

It localises to the cytoplasm. It catalyses the reaction Endonucleolytic cleavage at a junction such as a reciprocal single-stranded crossover between two homologous DNA duplexes (Holliday junction).. In terms of biological role, the RuvA-RuvB-RuvC complex processes Holliday junction (HJ) DNA during genetic recombination and DNA repair. Endonuclease that resolves HJ intermediates. Cleaves cruciform DNA by making single-stranded nicks across the HJ at symmetrical positions within the homologous arms, yielding a 5'-phosphate and a 3'-hydroxyl group; requires a central core of homology in the junction. The consensus cleavage sequence is 5'-(A/T)TT(C/G)-3'. Cleavage occurs on the 3'-side of the TT dinucleotide at the point of strand exchange. HJ branch migration catalyzed by RuvA-RuvB allows RuvC to scan DNA until it finds its consensus sequence, where it cleaves and resolves the cruciform DNA. This chain is Crossover junction endodeoxyribonuclease RuvC, found in Burkholderia pseudomallei (strain 1710b).